We begin with the raw amino-acid sequence, 177 residues long: Large ribosomal subunit protein uL6 (177 aa).

The protein belongs to the universal ribosomal protein uL6 family. In terms of assembly, part of the 50S ribosomal subunit.

Functionally, this protein binds to the 23S rRNA, and is important in its secondary structure. It is located near the subunit interface in the base of the L7/L12 stalk, and near the tRNA binding site of the peptidyltransferase center. This chain is Large ribosomal subunit protein uL6, found in Methanocella arvoryzae (strain DSM 22066 / NBRC 105507 / MRE50).